A 437-amino-acid polypeptide reads, in one-letter code: 3-ketoacyl-CoA thiolase (437 aa).

Residue C99 is the Acyl-thioester intermediate of the active site. Residues H392 and C422 each act as proton acceptor in the active site.

It belongs to the thiolase-like superfamily. Thiolase family. As to quaternary structure, heterotetramer of two alpha chains (FadJ) and two beta chains (FadI).

It is found in the cytoplasm. It carries out the reaction an acyl-CoA + acetyl-CoA = a 3-oxoacyl-CoA + CoA. Its pathway is lipid metabolism; fatty acid beta-oxidation. Catalyzes the final step of fatty acid oxidation in which acetyl-CoA is released and the CoA ester of a fatty acid two carbons shorter is formed. In Pectobacterium carotovorum subsp. carotovorum (strain PC1), this protein is 3-ketoacyl-CoA thiolase.